We begin with the raw amino-acid sequence, 72 residues long: Penaeidin-2d (72 aa).

Residues 1–21 (MRLVVCLVFLASFALVCQGGA) form the signal peptide. Gln22 carries the post-translational modification Pyrrolidone carboxylic acid. Disulfide bonds link Cys45/Cys59, Cys48/Cys66, and Cys60/Cys67. A Lysine amide modification is found at Lys71.

Belongs to the penaeidin family.

It is found in the cytoplasmic granule. Functionally, antibacterial and antifungal activity. Presents chitin-binding activity. The sequence is that of Penaeidin-2d from Penaeus setiferus (Atlantic white shrimp).